The chain runs to 423 residues: MKSRIFFITLLTIVAAQESADQLCSSFDAQQSCGQCIKAHAECAWCIDPHSSLTNRCQLKSKFTNETCTPHLVYSPQTAQVKIQQNLPLETKQHDGKTIVRQQPQAVSVRLMPSHSATVSFKYLHQTDPSRRSTEPETMEIQTSDVKDTPLQLKFFIVCDGELKETKSCRVQNNQIVEFKIEVLVNSCSSTGDITLSVGILRQRTIAGLYVTTICGCECEKHPEINSRLCHQNGHLVCGQCVCDQSRGGDKCECPLASHGVSKASELEDKCRFNSSSPVCSASGKCKCGQCQCNKPTVTGKFCQCDNDSCPLAVNGKVCSGNGVCDCGVCKCEMGWERDDCSCSTASNNCVDNGTPAPEEKDKPESVPEEPEATEKPDDMPSDSDLEKELDESSSAKEEQTSSSGVVSRVCVLLTFFLLVLNF.

A signal peptide spans 1 to 16 (MKSRIFFITLLTIVAA). Topologically, residues 17 to 402 (QESADQLCSS…SSSAKEEQTS (386 aa)) are extracellular. 16 disulfide bridges follow: Cys-24–Cys-217, Cys-33–Cys-43, Cys-36–Cys-68, Cys-46–Cys-57, Cys-219–Cys-238, Cys-230–Cys-241, Cys-243–Cys-252, Cys-254–Cys-288, Cys-271–Cys-286, Cys-280–Cys-291, Cys-293–Cys-303, Cys-305–Cys-327, Cys-310–Cys-325, Cys-319–Cys-330, Cys-332–Cys-341, and Cys-343–Cys-350. Asn-65 is a glycosylation site (N-linked (GlcNAc...) asparagine). The tract at residues 215-350 (CGCECEKHPE…CSCSTASNNC (136 aa)) is cysteine-rich tandem repeats. I-EGF domains follow at residues 219–253 (CEKH…DKCE), 254–304 (CPLA…KFCQ), and 305–342 (CDND…DDCS). The N-linked (GlcNAc...) asparagine glycan is linked to Asn-274. Residue Asn-307 is glycosylated (N-linked (GlcNAc...) asparagine). The segment at 354 to 406 (GTPAPEEKDKPESVPEEPEATEKPDDMPSDSDLEKELDESSSAKEEQTSSSGV) is disordered. Acidic residues predominate over residues 380–392 (MPSDSDLEKELDE). Residues 403–421 (SSGVVSRVCVLLTFFLLVL) traverse the membrane as a helical segment. Residues 422–423 (NF) lie on the Cytoplasmic side of the membrane.

It belongs to the integrin beta chain family.

Its subcellular location is the membrane. This is an uncharacterized protein from Caenorhabditis elegans.